The primary structure comprises 225 residues: Ribose-5-phosphate isomerase A (225 aa).

Residues 26 to 29 (TGST), 82 to 85 (DGAD), and 95 to 98 (KGGG) contribute to the substrate site. The active-site Proton acceptor is the E104. Substrate is bound at residue K122.

This sequence belongs to the ribose 5-phosphate isomerase family. Homodimer.

It carries out the reaction aldehydo-D-ribose 5-phosphate = D-ribulose 5-phosphate. It participates in carbohydrate degradation; pentose phosphate pathway; D-ribose 5-phosphate from D-ribulose 5-phosphate (non-oxidative stage): step 1/1. Functionally, catalyzes the reversible conversion of ribose-5-phosphate to ribulose 5-phosphate. In Streptococcus sanguinis (strain SK36), this protein is Ribose-5-phosphate isomerase A.